The chain runs to 509 residues: Glycerol kinase (509 aa).

Thr17 is a binding site for ADP. Thr17, Thr18, and Ser19 together coordinate ATP. Position 17 (Thr17) interacts with sn-glycerol 3-phosphate. Arg21 contacts ADP. Residues Arg87, Glu88, Tyr139, and Asp256 each contribute to the sn-glycerol 3-phosphate site. Residues Arg87, Glu88, Tyr139, Asp256, and Gln257 each contribute to the glycerol site. ADP-binding residues include Thr278 and Gly322. Residues Thr278, Gly322, Gln326, and Ala423 each contribute to the ATP site. 2 residues coordinate ADP: Ala423 and Asn427.

This sequence belongs to the FGGY kinase family.

It catalyses the reaction glycerol + ATP = sn-glycerol 3-phosphate + ADP + H(+). It participates in polyol metabolism; glycerol degradation via glycerol kinase pathway; sn-glycerol 3-phosphate from glycerol: step 1/1. Inhibited by fructose 1,6-bisphosphate (FBP). Key enzyme in the regulation of glycerol uptake and metabolism. Catalyzes the phosphorylation of glycerol to yield sn-glycerol 3-phosphate. This is Glycerol kinase from Corynebacterium glutamicum (strain R).